A 253-amino-acid chain; its full sequence is Tryptophan synthase alpha chain (253 aa).

Catalysis depends on proton acceptor residues Glu-44 and Asp-55.

The protein belongs to the TrpA family. As to quaternary structure, tetramer of two alpha and two beta chains.

The catalysed reaction is (1S,2R)-1-C-(indol-3-yl)glycerol 3-phosphate + L-serine = D-glyceraldehyde 3-phosphate + L-tryptophan + H2O. Its pathway is amino-acid biosynthesis; L-tryptophan biosynthesis; L-tryptophan from chorismate: step 5/5. The alpha subunit is responsible for the aldol cleavage of indoleglycerol phosphate to indole and glyceraldehyde 3-phosphate. In Chlamydia trachomatis serovar D (strain ATCC VR-885 / DSM 19411 / UW-3/Cx), this protein is Tryptophan synthase alpha chain (trpA).